Consider the following 723-residue polypeptide: MDGNDLVENKCPVMHGGITVAGHSNTAWWPETLNLEILHQHDTKVSPLGKDFNYRDAVKSLDFEALKKDMHDLMTNSQDWWPADYGHYGGLMIRLAWHSAGSYRLADGRGGGNTGNIRFAPLNSWPDNGNLDKARRLLWPIKKKYGNKISWADLILLSGTIAYESMGLKTYGFSFGREDIWAPEKDVYWGAEKEWLAPSDERYTDVDKPETMENPLAAVQMGLIYVNPEGVNGKSDPLKSAAQVRETFARMAMNDEETAALTCGGHTVGKAHGNGDAGKLSPPPEGNDLETQGFGWMNPNMDGKATNAVTSGIEGAWTTHPTKWDMGYFHLLFGYEWELTKSPAGASQWRPINIKEEDMPVDPTDPTKRVMPMMTDADMAMKMDPAYNAICQKFMADQAYFSDTFARAWFKLTHRDLGPRVRYIGPDAPQEDLIWQDPVPAGSKSYDVAAVKAKIADSGLSLSEMVSTAWDSARTFRGSDLRGGANGARIRLAPQKDWAGNEPARLQKVLSVLEPIASATGASVADVIVLAGNVGVEQAAKAAGFDISVPFSPGRGDATAEMTDADSFESLEPYADGFRNWQKEDYVVKPEELLLDRAQLLGLTGPEMTVLLGGMRVMGTNHGGTKHGVFTDKVGALTNDFFVNLTDMANKWVPRGKNAYDITDRKSGAVKFTATRADLVFGSNSILRAYAEIYAQDDAKEKFVKDFVAAWSKVMDADRFDLA.

A signal peptide spans 1–29; sequence MDGNDLVENKCPVMHGGITVAGHSNTAWW. Residues 97–225 constitute a cross-link (tryptophyl-tyrosyl-methioninium (Trp-Tyr) (with M-251)); it reads WHSAGSYRLA…LAAVQMGLIY (129 aa). The Proton acceptor role is filled by H98. Residues 225–251 constitute a cross-link (tryptophyl-tyrosyl-methioninium (Tyr-Met) (with W-97)); sequence YVNPEGVNGKSDPLKSAAQVRETFARM. H266 contributes to the heme b binding site.

It belongs to the peroxidase family. Peroxidase/catalase subfamily. As to quaternary structure, homodimer or homotetramer. It depends on heme b as a cofactor. Formation of the three residue Trp-Tyr-Met cross-link is important for the catalase, but not the peroxidase activity of the enzyme.

It catalyses the reaction H2O2 + AH2 = A + 2 H2O. The catalysed reaction is 2 H2O2 = O2 + 2 H2O. Its function is as follows. Bifunctional enzyme with both catalase and broad-spectrum peroxidase activity. The protein is Catalase-peroxidase of Hyphomonas neptunium (strain ATCC 15444).